The primary structure comprises 286 residues: Shikimate dehydrogenase (NADP(+)) (286 aa).

Residues 21-23 (TLS) and T68 contribute to the shikimate site. The active-site Proton acceptor is the K72. NADP(+) is bound at residue E84. Residues N93 and D108 each contribute to the shikimate site. NADP(+)-binding positions include 132 to 136 (GNGGA) and L230. Y232 serves as a coordination point for shikimate. G253 is an NADP(+) binding site.

This sequence belongs to the shikimate dehydrogenase family. As to quaternary structure, homodimer.

It catalyses the reaction shikimate + NADP(+) = 3-dehydroshikimate + NADPH + H(+). Its pathway is metabolic intermediate biosynthesis; chorismate biosynthesis; chorismate from D-erythrose 4-phosphate and phosphoenolpyruvate: step 4/7. Functionally, involved in the biosynthesis of the chorismate, which leads to the biosynthesis of aromatic amino acids. Catalyzes the reversible NADPH linked reduction of 3-dehydroshikimate (DHSA) to yield shikimate (SA). The chain is Shikimate dehydrogenase (NADP(+)) from Microcystis aeruginosa (strain NIES-843 / IAM M-2473).